Reading from the N-terminus, the 83-residue chain is CDC42 small effector protein 2 (83 aa).

Residues C10 and C11 are each lipidated (S-palmitoyl cysteine). A CRIB domain is found at 28–41; the sequence is IGEPTNFVHTAHVG. Residues S42 and S51 each carry the phosphoserine modification.

It belongs to the CDC42SE/SPEC family. As to quaternary structure, interacts with CDC42 (in GTP-bound form). Interacts weakly with RAC1 and not at all with RHOA.

It localises to the cytoplasm. The protein resides in the cytoskeleton. The protein localises to the cell membrane. It is found in the cell projection. Its subcellular location is the phagocytic cup. Probably involved in the organization of the actin cytoskeleton by acting downstream of CDC42, inducing actin filament assembly. Alters CDC42-induced cell shape changes. In activated T-cells, may play a role in CDC42-mediated F-actin accumulation at the immunological synapse. May play a role in early contractile events in phagocytosis in macrophages. The polypeptide is CDC42 small effector protein 2 (Cdc42se2) (Rattus norvegicus (Rat)).